An 80-amino-acid polypeptide reads, in one-letter code: Translation initiation factor IF-1 (80 aa).

Residues 6 to 80 (EKKKKDESDS…TSRGRIVYRR (75 aa)) enclose the S1-like domain.

Belongs to the IF-1 family. Component of the 30S ribosomal translation pre-initiation complex which assembles on the 30S ribosome in the order IF-2 and IF-3, IF-1 and N-formylmethionyl-tRNA(fMet); mRNA recruitment can occur at any time during PIC assembly.

It localises to the cytoplasm. Its function is as follows. One of the essential components for the initiation of protein synthesis. Stabilizes the binding of IF-2 and IF-3 on the 30S subunit to which N-formylmethionyl-tRNA(fMet) subsequently binds. Helps modulate mRNA selection, yielding the 30S pre-initiation complex (PIC). Upon addition of the 50S ribosomal subunit IF-1, IF-2 and IF-3 are released leaving the mature 70S translation initiation complex. In Deinococcus radiodurans (strain ATCC 13939 / DSM 20539 / JCM 16871 / CCUG 27074 / LMG 4051 / NBRC 15346 / NCIMB 9279 / VKM B-1422 / R1), this protein is Translation initiation factor IF-1.